Consider the following 509-residue polypeptide: Cytochrome P450 4A10 (509 aa).

2 helical membrane passes run Phe-11 to Leu-31 and Leu-121 to His-141. Glu-320 provides a ligand contact to heme. A Phosphoserine modification is found at Ser-439. Residue Cys-456 coordinates heme.

This sequence belongs to the cytochrome P450 family. Requires heme as cofactor. As to expression, expressed in liver (at protein level) and kidney (at protein level).

The protein localises to the endoplasmic reticulum membrane. The protein resides in the microsome membrane. It catalyses the reaction an omega-methyl-long-chain fatty acid + reduced [NADPH--hemoprotein reductase] + O2 = an omega-hydroxy-long-chain fatty acid + oxidized [NADPH--hemoprotein reductase] + H2O + H(+). The catalysed reaction is dodecanoate + reduced [NADPH--hemoprotein reductase] + O2 = 12-hydroxydodecanoate + oxidized [NADPH--hemoprotein reductase] + H2O + H(+). The enzyme catalyses dodecanoate + reduced [NADPH--hemoprotein reductase] + O2 = 11-hydroxydodecanoate + oxidized [NADPH--hemoprotein reductase] + H2O + H(+). It carries out the reaction tetradecanoate + reduced [NADPH--hemoprotein reductase] + O2 = 14-hydroxytetradecanoate + oxidized [NADPH--hemoprotein reductase] + H2O + H(+). It catalyses the reaction hexadecanoate + reduced [NADPH--hemoprotein reductase] + O2 = 16-hydroxyhexadecanoate + oxidized [NADPH--hemoprotein reductase] + H2O + H(+). The catalysed reaction is (9Z)-octadecenoate + reduced [NADPH--hemoprotein reductase] + O2 = 18-hydroxy-(9Z)-octadecenoate + oxidized [NADPH--hemoprotein reductase] + H2O + H(+). The enzyme catalyses (9Z,12Z)-octadecadienoate + reduced [NADPH--hemoprotein reductase] + O2 = 18-hydroxy-(9Z,12Z)-octadecadienoate + oxidized [NADPH--hemoprotein reductase] + H2O + H(+). It carries out the reaction (9Z,12Z)-octadecadienoate + reduced [NADPH--hemoprotein reductase] + O2 = 17-hydroxy-(9Z,12Z)-octadecadienoate + oxidized [NADPH--hemoprotein reductase] + H2O + H(+). It catalyses the reaction (5Z,8Z,11Z,14Z)-eicosatetraenoate + reduced [NADPH--hemoprotein reductase] + O2 = 20-hydroxy-(5Z,8Z,11Z,14Z)-eicosatetraenoate + oxidized [NADPH--hemoprotein reductase] + H2O + H(+). The catalysed reaction is 8,9-epoxy-(5Z,11Z,14Z)-eicosatrienoate + reduced [NADPH--hemoprotein reductase] + O2 = 20-hydroxy-8,9-epoxy-(5Z,11Z,14Z)-eicosatrienoate + oxidized [NADPH--hemoprotein reductase] + H2O + H(+). Its function is as follows. A cytochrome P450 monooxygenase involved in the metabolism of fatty acids. Catalyzes predominantly the oxidation of the terminal carbon (omega-oxidation) of long-chain fatty acids. Acts as a major omega-hydroxylase for dodecanoic (lauric) acid in liver. In kidney, may play an important role in omega-hydroxylation of (5Z,8Z,11Z,14Z)-eicosatetraenoic acid (arachidonate) to 20-hydroxyeicosatetraenoic acid (20-HETE), a signaling molecule acting both as vasoconstrictive and natriuretic with overall effect on arterial blood pressure. Also participates in the formation of anti-inflammatory hydroxyepoxyeicosatrienoic acids (HEETs) in kidney by converting 8,9-epoxyeicosatrienoic acid (EET) to 20,8,9-HEET, an activator of PPARA. Displays substantially lower fatty acid omega-1 hydroxylase activity. Mechanistically, uses molecular oxygen inserting one oxygen atom into a substrate, and reducing the second into a water molecule, with two electrons provided by NADPH via cytochrome P450 reductase (CPR; NADPH-ferrihemoprotein reductase). The sequence is that of Cytochrome P450 4A10 (Cyp4a10) from Rattus norvegicus (Rat).